A 136-amino-acid polypeptide reads, in one-letter code: Ribosome-binding factor A (136 aa).

The protein belongs to the RbfA family. Monomer. Binds 30S ribosomal subunits, but not 50S ribosomal subunits or 70S ribosomes.

The protein localises to the cytoplasm. In terms of biological role, one of several proteins that assist in the late maturation steps of the functional core of the 30S ribosomal subunit. Associates with free 30S ribosomal subunits (but not with 30S subunits that are part of 70S ribosomes or polysomes). Required for efficient processing of 16S rRNA. May interact with the 5'-terminal helix region of 16S rRNA. This Serratia proteamaculans (strain 568) protein is Ribosome-binding factor A.